Consider the following 1415-residue polypeptide: G8 domain-containing protein DDB_G0278975 (1415 aa).

The N-terminal stretch at 1–24 (MKINKIILFFFLSCLYLFSSSVSA) is a signal peptide. Transmembrane regions (helical) follow at residues 107–127 (INLN…GLFT) and 138–158 (LLFI…SIKI). N-linked (GlcNAc...) asparagine glycans are attached at residues N245, N366, N428, N466, and N579. One can recognise a G8 domain in the interval 566 to 692 (STWPNGIIPS…YHNTWSKLSA (127 aa)). PbH1 repeat units lie at residues 819 to 841 (LKNS…TIHG) and 842 to 864 (TNNV…YLED). N-linked (GlcNAc...) asparagine glycans are attached at residues N844, N985, N1009, N1023, N1099, N1244, and N1342.

The protein belongs to the comF family.

It is found in the membrane. This chain is G8 domain-containing protein DDB_G0278975, found in Dictyostelium discoideum (Social amoeba).